A 295-amino-acid polypeptide reads, in one-letter code: Probable aspartoacylase (295 aa).

Residues H13 and E16 each coordinate Zn(2+). Substrate contacts are provided by residues R54 and 61-62 (NR). H100 serves as a coordination point for Zn(2+). Residues E158 and Y268 each contribute to the substrate site.

It belongs to the AspA/AstE family. Aspartoacylase subfamily. It depends on Zn(2+) as a cofactor.

The enzyme catalyses an N-acyl-L-aspartate + H2O = a carboxylate + L-aspartate. This Prochlorococcus marinus subsp. pastoris (strain CCMP1986 / NIES-2087 / MED4) protein is Probable aspartoacylase.